The chain runs to 384 residues: uncharacterized protein (384 aa).

The segment covering 327 to 339 (KKEKKEKKEKKPK) has biased composition (basic residues). The interval 327 to 358 (KKEKKEKKEKKPKKAVEEEPKQYLTPEFVNDD) is disordered.

This is an uncharacterized protein from Magallana gigas (Pacific oyster).